Reading from the N-terminus, the 104-residue chain is Defensin-2 (104 aa).

Positions 1–19 (MKFFVLFAILIAIVHASCA) are cleaved as a signal peptide. Intrachain disulfides connect cysteine 64/cysteine 95, cysteine 81/cysteine 100, and cysteine 85/cysteine 102.

This sequence belongs to the invertebrate defensin family. Type 1 subfamily. In terms of tissue distribution, low expression in head and thorax.

It localises to the secreted. Its function is as follows. Antibacterial peptide mostly active against Gram-positive bacteria. The protein is Defensin-2 of Apis mellifera (Honeybee).